The sequence spans 502 residues: Arginine decarboxylase (502 aa).

An N6-(pyridoxal phosphate)lysine modification is found at K42. 226–236 (IDIGGGLGIDY) provides a ligand contact to substrate.

Belongs to the Orn/Lys/Arg decarboxylase class-II family. SpeA subfamily. Pyridoxal 5'-phosphate is required as a cofactor. The cofactor is Mg(2+).

The catalysed reaction is L-arginine + H(+) = agmatine + CO2. It participates in amine and polyamine biosynthesis; agmatine biosynthesis; agmatine from L-arginine: step 1/1. This Solanum lycopersicum (Tomato) protein is Arginine decarboxylase.